The primary structure comprises 330 residues: Polyprenal reductase (330 aa).

Residues M1–R16 lie on the Cytoplasmic side of the membrane. The helical transmembrane segment at A17 to A37 threads the bilayer. Over R38 to S89 the chain is Lumenal. Residues L90 to A110 form a helical membrane-spanning segment. The Cytoplasmic segment spans residues L111–K136. The helical transmembrane segment at L137–F157 threads the bilayer. The Lumenal segment spans residues E158–A169. The chain crosses the membrane as a helical span at residues I170–L190. The Cytoplasmic segment spans residues S191–N206. The helical transmembrane segment at L207 to A227 threads the bilayer. At H228–S277 the chain is on the lumenal side. The helical transmembrane segment at M278–F298 threads the bilayer. The Cytoplasmic segment spans residues S299–F330.

The protein belongs to the steroid 5-alpha reductase family. Polyprenal reductase subfamily. As to expression, expressed in the 2 tissues tested i.e. testis and liver.

The protein resides in the endoplasmic reticulum membrane. The enzyme catalyses a di-trans,poly-cis-dolichal + NADP(+) = a di-trans,poly-cis-polyprenal + NADPH + H(+). It carries out the reaction a 3-oxo-5alpha-steroid + NADP(+) = a 3-oxo-Delta(4)-steroid + NADPH + H(+). The catalysed reaction is androst-4-ene-3,17-dione + NADPH + H(+) = 5alpha-androstan-3,17-dione + NADP(+). It catalyses the reaction 17beta-hydroxy-5alpha-androstan-3-one + NADP(+) = testosterone + NADPH + H(+). It functions in the pathway protein modification; protein glycosylation. Plays a key role in early steps of protein N-linked glycosylation by being involved in the conversion of polyprenol into dolichol. Acts as a polyprenal reductase that mediates the reduction of polyprenal into dolichal in a NADP-dependent mechanism. Dolichols are required for the synthesis of dolichol-linked monosaccharides and the oligosaccharide precursor used for N-glycosylation. Also able to convert testosterone (T) into 5-alpha-dihydrotestosterone (DHT). This is Polyprenal reductase from Rattus norvegicus (Rat).